Consider the following 315-residue polypeptide: MLKNKILATTLSVSLLAPLANPLLENAKAANDTEDIGKGSDIEIIKRTEDKTSNKWGVTQNIQFDFVKDTKYNKDALILKMQGFISSRTTYYNYKKTNHVKAMRWPFQYNIGLKTNDKYVSLINYLPKNKIESTNVSQTLGYNIGGNFQSAPSLGGNGSFNYSKSISYTQQNYVSEVEQQNSKSVLWGVKANSFATESGQKSAFDSDLFVGYKPHSKDPRDYFVPDSELPPLVQSGFNPSFIATVSHEKGSSDTSEFEITYGRNMDVTHAIKRSTHYGNSYLDGHRVHNAFVNRNYTVKYEVNWKTHEIKVKGQN.

Residues 1–29 (MLKNKILATTLSVSLLAPLANPLLENAKA) form the signal peptide.

The protein belongs to the aerolysin family. In terms of assembly, leukocidin consists of two protein components: F and S.

In terms of biological role, leukocidin causes cytotoxic changes in polymorphonuclear leukocytes. This is Leukocidin-S subunit (lukS) from Staphylococcus aureus.